We begin with the raw amino-acid sequence, 100 residues long: U12-ctenitoxin-Pn1a (100 aa).

An N-terminal signal peptide occupies residues 1–28 (MKYRIFKMKYTLLFLSVIALVHIFAVEA). Residues 29-41 (KDEPESDALVPQE) constitute a propeptide that is removed on maturation. 5 disulfide bridges follow: cysteine 44–cysteine 58, cysteine 51–cysteine 64, cysteine 57–cysteine 82, cysteine 66–cysteine 80, and cysteine 90–cysteine 97.

It belongs to the neurotoxin 09 (Tx3-6) family. In terms of tissue distribution, expressed by the venom gland.

It is found in the secreted. Functionally, probable neurotoxin. In Phoneutria nigriventer (Brazilian armed spider), this protein is U12-ctenitoxin-Pn1a.